The following is a 934-amino-acid chain: Complement component C6 (934 aa).

The first 21 residues, 1–21 (MTRHLTLCFILLVMLIDKSEA), serve as a signal peptide directing secretion. 11 disulfides stabilise this stretch: Cys-22–Cys-61, Cys-24–Cys-65, Cys-35–Cys-73, Cys-39–Cys-78, Cys-82–Cys-117, Cys-93–Cys-127, Cys-96–Cys-133, Cys-140–Cys-151, Cys-146–Cys-164, Cys-158–Cys-173, and Cys-180–Cys-218. TSP type-1 domains lie at 22 to 79 (CFCD…QTCP) and 81 to 134 (NCVL…KLCK). One can recognise an LDL-receptor class A domain in the interval 138 to 175 (TNCKNKFLCDSGRCIPSKLECNGENDCGDNSDERNCGR). Ca(2+) contacts are provided by Leu-156, Asn-159, Glu-161, Asp-163, Asp-169, and Glu-170. Positions 176–522 (TKPVCTRIYT…EYAAKFDPCQ (347 aa)) constitute an MACPF domain. Residues 278–290 (FFPIPIFHFSEKN) traverse the membrane as a beta stranded segment. A glycan (N-linked (GlcNAc...) asparagine) is linked at Asn-324. 16 disulfide bridges follow: Cys-399–Cys-420, Cys-499–Cys-623, Cys-521–Cys-570, Cys-523–Cys-539, Cys-526–Cys-541, Cys-543–Cys-552, Cys-577–Cys-611, Cys-589–Cys-601, Cys-644–Cys-686, Cys-672–Cys-699, Cys-704–Cys-746, Cys-732–Cys-761, Cys-773–Cys-823, Cys-784–Cys-801, Cys-786–Cys-837, and Cys-793–Cys-816. Residues 402-415 (YETKKLKFLYMEIH) form a beta stranded membrane-spanning segment. The EGF-like domain maps to 523 to 553 (CAPCPNNGRPRLSGTECLCVCQSGTYGENCE). The region spanning 565–612 (DGNWGCWSSWSACNAAYRRSRTRECNNPAPQRGGQSCGGKDQQEEDCT) is the TSP type-1 3 domain. 2 CCP regions span residues 611-688 (CTVS…RCLP) and 689-765 (DRTW…EQAI). 2 Sushi domains span residues 642 to 701 (SGCS…ECQR) and 702 to 763 (TSCL…TCEQ). Residues 642-934 (SGCSQPPLPE…EILNPGRCPD (293 aa)) form a C5b-binding domain region. The segment at 766-840 (LTKSKDLCPP…FVHSGSCQEG (75 aa)) is factor I module (FIM) 1. Positions 785 to 839 (ICMSPEEDCSAYSEDLCIFDGGSSQYFTSSACKFLAGKCLNNTQSHFVHSGSCQE) constitute a Kazal-like 1 domain. Asn-825, Asn-855, and Asn-872 each carry an N-linked (GlcNAc...) asparagine glycan. Residues 858–934 (KRVSCGYNTC…EILNPGRCPD (77 aa)) are factor I module (FIM) 2. 5 disulfide bridges follow: Cys-862/Cys-873, Cys-867/Cys-919, Cys-880/Cys-897, Cys-882/Cys-932, and Cys-888/Cys-912. The Kazal-like 2 domain occupies 876–934 (HTSNCVCLLPPQCSKDENQLYCVKIGSSMREKTVNICTLGAVRCANIKVEILNPGRCPD).

It belongs to the complement C6/C7/C8/C9 family. Component of the membrane attack complex (MAC), composed of complement C5b, C6, C7, C8A, C8B, C8G and multiple copies of the pore-forming subunit C9. All cysteine residues are assumed to be cross-linked to one another. Individual modules containing an even number of conserved cysteine residues are supposed to have disulfide linkages only within the same module.

It is found in the secreted. Its subcellular location is the target cell membrane. With respect to regulation, membrane attack complex (MAC) assembly is inhibited by CD59, thereby protecting self-cells from damage during complement activation. MAC assembly is also inhibited by clusterin (CLU) chaperones that inhibit polymerization of C9. Functionally, component of the membrane attack complex (MAC), a multiprotein complex activated by the complement cascade, which inserts into a target cell membrane and forms a pore, leading to target cell membrane rupture and cell lysis. The MAC is initiated by proteolytic cleavage of C5 into complement C5b in response to the classical, alternative, lectin and GZMK complement pathways. The complement pathways consist in a cascade of proteins that leads to phagocytosis and breakdown of pathogens and signaling that strengthens the adaptive immune system. Together with component C5b, involved in MAC complex assembly: complement C5b and C6 associate with the outer leaflet of target cell membrane, reducing the energy for membrane bending. In Mus musculus (Mouse), this protein is Complement component C6.